We begin with the raw amino-acid sequence, 397 residues long: Proteasome-activating nucleotidase (397 aa).

The stretch at 12–58 (GYEDYITFLKRRIRQLELQVRTLEADKERLERELSRLRTEMSRLRQP) forms a coiled coil. ATP-binding positions include 182–187 (GCGKTL) and His321. The interval 395–397 (MYG) is docks into pockets in the proteasome alpha-ring to cause gate opening.

Belongs to the AAA ATPase family. In terms of assembly, homohexamer. The hexameric complex has a two-ring architecture resembling a top hat that caps the 20S proteasome core at one or both ends. Upon ATP-binding, the C-terminus of PAN interacts with the alpha-rings of the proteasome core by binding to the intersubunit pockets.

The protein resides in the cytoplasm. Functionally, ATPase which is responsible for recognizing, binding, unfolding and translocation of substrate proteins into the archaeal 20S proteasome core particle. Is essential for opening the gate of the 20S proteasome via an interaction with its C-terminus, thereby allowing substrate entry and access to the site of proteolysis. Thus, the C-termini of the proteasomal ATPase function like a 'key in a lock' to induce gate opening and therefore regulate proteolysis. Unfolding activity requires energy from ATP hydrolysis, whereas ATP binding alone promotes ATPase-20S proteasome association which triggers gate opening, and supports translocation of unfolded substrates. In Thermococcus gammatolerans (strain DSM 15229 / JCM 11827 / EJ3), this protein is Proteasome-activating nucleotidase.